A 2067-amino-acid polypeptide reads, in one-letter code: Dedicator of cytokinesis protein 11 (2067 aa).

In terms of domain architecture, PH spans 162–269 (GVMKQGWLQK…WVNTIKQALL (108 aa)). Residues 274 to 302 (DRRNGSETSEGSLDDDSSSQGKPESITES) form a disordered region. Positions 291–302 (SSQGKPESITES) are enriched in polar residues. The 178-residue stretch at 643–820 (NNHLYIYPQQ…PLFKVRAYVA (178 aa)) folds into the C2 DOCK-type domain. The segment at 1224-1267 (SSTIVDKEPSGSVTQNGLSRRGESRGSMYGDPGTPDINELHRRG) is disordered. The DOCKER domain occupies 1614 to 2040 (RSYASTPELR…LSEIIHEQIF (427 aa)).

The protein belongs to the DOCK family.

In terms of biological role, guanine nucleotide-exchange factor (GEF) that activates CDC42 by exchanging bound GDP for free GTP. In Danio rerio (Zebrafish), this protein is Dedicator of cytokinesis protein 11.